A 56-amino-acid polypeptide reads, in one-letter code: Sperm protamine P1 (56 aa).

Residues 1 to 56 form a disordered region; it reads RLSRRRVYSIGGRRRRRRRRSRGRRGRRRGRRRGRRRGRRRGRRRRRRRGGRRRRR.

P2 is phosphorylated in immature sperm. It is dephosphorylated in mature sperm allowing a stronger interaction with DNA. As to expression, testis.

It localises to the nucleus. Its subcellular location is the chromosome. Protamines substitute for histones in the chromatin of sperm during the haploid phase of spermatogenesis. They compact sperm DNA into a highly condensed, stable and inactive complex. In terms of biological role, octopus spermiogenesis is characterized by a double nuclear protein transition: Histones are first replaced by P1, which allows the chromatin to adopt a shape that is not as relaxed as with histones. The majority of P1 is later replaced by P2, forming a compact chromatin. P2 is the main protamine of sperm. The chain is Sperm protamine P1 from Octopus vulgaris (Common octopus).